We begin with the raw amino-acid sequence, 196 residues long: Holliday junction branch migration complex subunit RuvA (196 aa).

Residues 1 to 63 are domain I; sequence MIASVRGEVI…EDSMTLYGFA (63 aa). Residues 64 to 142 form a domain II region; that stretch reads DADARDLFGT…PVTTGAGVTA (79 aa). The segment at 143–151 is flexible linker; it reads VGGHAVRGP. The segment at 151 to 196 is domain III; it reads PVVEALVGLGFAAKQAEEACDKVLAADPDATTSSALRAALSMLGKK.

The protein belongs to the RuvA family. Homotetramer. Forms an RuvA(8)-RuvB(12)-Holliday junction (HJ) complex. HJ DNA is sandwiched between 2 RuvA tetramers; dsDNA enters through RuvA and exits via RuvB. An RuvB hexamer assembles on each DNA strand where it exits the tetramer. Each RuvB hexamer is contacted by two RuvA subunits (via domain III) on 2 adjacent RuvB subunits; this complex drives branch migration. In the full resolvosome a probable DNA-RuvA(4)-RuvB(12)-RuvC(2) complex forms which resolves the HJ.

The protein resides in the cytoplasm. The RuvA-RuvB-RuvC complex processes Holliday junction (HJ) DNA during genetic recombination and DNA repair, while the RuvA-RuvB complex plays an important role in the rescue of blocked DNA replication forks via replication fork reversal (RFR). RuvA specifically binds to HJ cruciform DNA, conferring on it an open structure. The RuvB hexamer acts as an ATP-dependent pump, pulling dsDNA into and through the RuvAB complex. HJ branch migration allows RuvC to scan DNA until it finds its consensus sequence, where it cleaves and resolves the cruciform DNA. This is Holliday junction branch migration complex subunit RuvA from Mycobacterium sp. (strain JLS).